The following is a 343-amino-acid chain: MAKLKVGINGFGRIGRLVLRAGINNPNIEFVGINDLVPPDNLAYLLKYDSTHGRLRSQVETKDDGIVIDGHFIPCVSVRNPAELPWGKLGADYVVESTGLFTDSEGASKHLQAGARRVIISAPTKDPDRVRTLLVGVNHDLFDPSKDLIVSNASCTTNCLAPIAKVINDNFGLTEGLMTTVHAMTATQPTVDGPSKKDWRGGRGAAQNIIPSSTGAAKAVALVLPELKGKLTGMAFRVPTPDVSVVDLTFKTAKATSYKEICAAMKQASEGSLAGILGYTDEEVVSTDFQGDTHSSIFDAGAGIELNSNFFKVVAWYDNEWGYSNRVVDLMLSMVQKEQLAAV.

Residues 13-14 (RI), aspartate 35, arginine 79, and serine 121 each bind NAD(+). D-glyceraldehyde 3-phosphate contacts are provided by residues 154 to 156 (SCT), threonine 185, 214 to 215 (TG), and arginine 237. The Nucleophile role is filled by cysteine 155. Asparagine 319 serves as a coordination point for NAD(+).

The protein belongs to the glyceraldehyde-3-phosphate dehydrogenase family. Homotetramer.

It is found in the cytoplasm. The catalysed reaction is D-glyceraldehyde 3-phosphate + phosphate + NAD(+) = (2R)-3-phospho-glyceroyl phosphate + NADH + H(+). The protein operates within carbohydrate degradation; glycolysis; pyruvate from D-glyceraldehyde 3-phosphate: step 1/5. Functionally, catalyzes the oxidative phosphorylation of glyceraldehyde 3-phosphate (G3P) to 1,3-bisphosphoglycerate (BPG) using the cofactor NAD. The first reaction step involves the formation of a hemiacetal intermediate between G3P and a cysteine residue, and this hemiacetal intermediate is then oxidized to a thioester, with concomitant reduction of NAD to NADH. The reduced NADH is then exchanged with the second NAD, and the thioester is attacked by a nucleophilic inorganic phosphate to produce BPG. The chain is Glyceraldehyde-3-phosphate dehydrogenase 1 (gap1) from Nostoc sp. (strain PCC 7120 / SAG 25.82 / UTEX 2576).